The chain runs to 292 residues: ATP synthase gamma chain (292 aa).

It belongs to the ATPase gamma chain family. F-type ATPases have 2 components, CF(1) - the catalytic core - and CF(0) - the membrane proton channel. CF(1) has five subunits: alpha(3), beta(3), gamma(1), delta(1), epsilon(1). CF(0) has three main subunits: a, b and c.

It localises to the cell membrane. Functionally, produces ATP from ADP in the presence of a proton gradient across the membrane. The gamma chain is believed to be important in regulating ATPase activity and the flow of protons through the CF(0) complex. This Streptococcus thermophilus (strain CNRZ 1066) protein is ATP synthase gamma chain.